Consider the following 249-residue polypeptide: Phosphomannomutase 2 (249 aa).

Residue Asp12 is the Nucleophile of the active site. Residues Asp12 and Asp14 each contribute to the Mg(2+) site. The active-site Proton donor/acceptor is Asp14. Alpha-D-mannose 1-phosphate is bound by residues Arg21, Arg123, Arg134, Arg141, Ser179, and Asp181. Asp209 serves as a coordination point for Mg(2+).

Belongs to the eukaryotic PMM family. Homodimer.

The protein localises to the cytoplasm. It catalyses the reaction alpha-D-mannose 1-phosphate = D-mannose 6-phosphate. The protein operates within nucleotide-sugar biosynthesis; GDP-alpha-D-mannose biosynthesis; alpha-D-mannose 1-phosphate from D-fructose 6-phosphate: step 2/2. Involved in the synthesis of the GDP-mannose and dolichol-phosphate-mannose required for a number of critical mannosyl transfer reactions. The protein is Phosphomannomutase 2 (pmmB) of Dictyostelium discoideum (Social amoeba).